Reading from the N-terminus, the 338-residue chain is Ketol-acid reductoisomerase (NADP(+)) (338 aa).

One can recognise a KARI N-terminal Rossmann domain in the interval 1–181 (MKVFYDKDCD…GGGKAGIIET (181 aa)). Residues 24-27 (YGSQ), R47, and S52 each bind NADP(+). The active site involves H107. An NADP(+)-binding site is contributed by G133. A KARI C-terminal knotted domain is found at 182–327 (NFKEETETDL…AQLRAMMPWI (146 aa)). Mg(2+)-binding residues include D190, E194, E226, and E230. Position 251 (S251) interacts with substrate.

It belongs to the ketol-acid reductoisomerase family. Mg(2+) is required as a cofactor.

It carries out the reaction (2R)-2,3-dihydroxy-3-methylbutanoate + NADP(+) = (2S)-2-acetolactate + NADPH + H(+). It catalyses the reaction (2R,3R)-2,3-dihydroxy-3-methylpentanoate + NADP(+) = (S)-2-ethyl-2-hydroxy-3-oxobutanoate + NADPH + H(+). Its pathway is amino-acid biosynthesis; L-isoleucine biosynthesis; L-isoleucine from 2-oxobutanoate: step 2/4. It functions in the pathway amino-acid biosynthesis; L-valine biosynthesis; L-valine from pyruvate: step 2/4. Functionally, involved in the biosynthesis of branched-chain amino acids (BCAA). Catalyzes an alkyl-migration followed by a ketol-acid reduction of (S)-2-acetolactate (S2AL) to yield (R)-2,3-dihydroxy-isovalerate. In the isomerase reaction, S2AL is rearranged via a Mg-dependent methyl migration to produce 3-hydroxy-3-methyl-2-ketobutyrate (HMKB). In the reductase reaction, this 2-ketoacid undergoes a metal-dependent reduction by NADPH to yield (R)-2,3-dihydroxy-isovalerate. This chain is Ketol-acid reductoisomerase (NADP(+)), found in Paracidovorax citrulli (strain AAC00-1) (Acidovorax citrulli).